Here is a 359-residue protein sequence, read N- to C-terminus: Peptide chain release factor 1 (359 aa).

N5-methylglutamine is present on glutamine 236.

It belongs to the prokaryotic/mitochondrial release factor family. Post-translationally, methylated by PrmC. Methylation increases the termination efficiency of RF1.

It is found in the cytoplasm. Functionally, peptide chain release factor 1 directs the termination of translation in response to the peptide chain termination codons UAG and UAA. In Streptococcus agalactiae serotype Ia (strain ATCC 27591 / A909 / CDC SS700), this protein is Peptide chain release factor 1.